A 320-amino-acid polypeptide reads, in one-letter code: HPr kinase/phosphorylase (320 aa).

Catalysis depends on residues histidine 141 and lysine 162. 156–163 (GHSGLGKS) is a binding site for ATP. Serine 163 contributes to the Mg(2+) binding site. The Proton acceptor; for phosphorylation activity. Proton donor; for dephosphorylation activity role is filled by aspartate 180. The segment at 204–213 (LEVRGLGILN) is important for the catalytic mechanism of both phosphorylation and dephosphorylation. Residue glutamate 205 coordinates Mg(2+). Arginine 248 is an active-site residue. Residues 269 to 274 (PVAVGR) are important for the catalytic mechanism of dephosphorylation.

The protein belongs to the HPrK/P family. In terms of assembly, homohexamer. It depends on Mg(2+) as a cofactor.

It carries out the reaction [HPr protein]-L-serine + ATP = [HPr protein]-O-phospho-L-serine + ADP + H(+). It catalyses the reaction [HPr protein]-O-phospho-L-serine + phosphate + H(+) = [HPr protein]-L-serine + diphosphate. Catalyzes the ATP- as well as the pyrophosphate-dependent phosphorylation of a specific serine residue in HPr, a phosphocarrier protein of the phosphoenolpyruvate-dependent sugar phosphotransferase system (PTS). HprK/P also catalyzes the pyrophosphate-producing, inorganic phosphate-dependent dephosphorylation (phosphorolysis) of seryl-phosphorylated HPr (P-Ser-HPr). The sequence is that of HPr kinase/phosphorylase from Neisseria gonorrhoeae (strain ATCC 700825 / FA 1090).